The sequence spans 314 residues: Fibrinogen-like protein 1 (314 aa).

A signal peptide spans 1–22 (MGEIRSFLLVTIALMMGREIWA). A coiled-coil region spans residues 25-59 (NSKCLLEQERLRAQVQQLETRVKQQQARIAQLMHE). One can recognise a Fibrinogen C-terminal domain in the interval 76–308 (LGGKRQYADC…SVVMKIRPND (233 aa)). 2 cysteine pairs are disulfide-bonded: C85–C114 and C250–C263.

In terms of assembly, homodimer. Interacts (via the Fibrinogen C-terminal domain) with LAG3 (via Ig-like domains 1 and 2).

The protein localises to the secreted. Its function is as follows. Immune suppressive molecule that inhibits antigen-specific T-cell activation by acting as a major ligand of LAG3. Responsible for LAG3 T-cell inhibitory function. Binds LAG3 independently from MHC class II (MHC-II). Secreted by, and promotes growth of, hepatocytes. This chain is Fibrinogen-like protein 1, found in Mesocricetus auratus (Golden hamster).